The following is a 362-amino-acid chain: Adenosine deaminase (362 aa).

Zn(2+) contacts are provided by H19 and H21. Residues H21, D23, and G181 each coordinate substrate. Position 208 (H208) interacts with Zn(2+). Catalysis depends on E211, which acts as the Proton donor. D300 is a binding site for Zn(2+).

The protein belongs to the metallo-dependent hydrolases superfamily. Adenosine and AMP deaminases family. Adenosine deaminase subfamily. Requires Zn(2+) as cofactor.

The enzyme catalyses adenosine + H2O + H(+) = inosine + NH4(+). It carries out the reaction 2'-deoxyadenosine + H2O + H(+) = 2'-deoxyinosine + NH4(+). In terms of biological role, catalyzes the hydrolytic deamination of adenosine and 2-deoxyadenosine. The chain is Adenosine deaminase from Mycobacterium ulcerans (strain Agy99).